A 428-amino-acid polypeptide reads, in one-letter code: Protein ECERIFERUM 26 (428 aa).

The segment at 1–36 (MGRSQEQGQGQGPVHSIRLSTVGATRPTETGTTHEP) is disordered. Over residues 21–36 (TVGATRPTETGTTHEP) the composition is skewed to low complexity.

Belongs to the plant acyltransferase family. As to expression, highly expressed in leaves.

It is found in the cytoplasm. Its subcellular location is the cytosol. Involved in biosynthesis of the epicuticular wax. Plays a role in very-long-chain fatty acid (VLCFA) biosynthesis and is required for C30 fatty acid elongation in leaf. Despite its classification as a BAHD acyltransferase based on sequence homology, CER26 does not seem to share the catalytic mechanism of the members of the BAHD family. The protein is Protein ECERIFERUM 26 (CER26) of Arabidopsis thaliana (Mouse-ear cress).